The sequence spans 207 residues: N-(5'-phosphoribosyl)anthranilate isomerase (207 aa).

Belongs to the TrpF family.

It catalyses the reaction N-(5-phospho-beta-D-ribosyl)anthranilate = 1-(2-carboxyphenylamino)-1-deoxy-D-ribulose 5-phosphate. Its pathway is amino-acid biosynthesis; L-tryptophan biosynthesis; L-tryptophan from chorismate: step 3/5. The polypeptide is N-(5'-phosphoribosyl)anthranilate isomerase (Legionella pneumophila (strain Corby)).